Consider the following 90-residue polypeptide: Serine protease inhibitor Cvsi-1 (90 aa).

A signal peptide spans 1–19 (MDVVRTLILCVCLFGLTFA).

In terms of processing, contains 6 disulfide bonds. As to expression, detected in hemolymph (at protein level). In oysters collected in the summer the expression level is highest in the digestive gland with low levels of expression in gill, mantle, labial palp, style-sac midgut, gonad, heart, and hemocyte. In winter expression levels are higher in all tissues with highest expression levels observed in the digestive gland. Within the digestive gland expression is limited to the basophil cells of the digestive diverticula.

The protein resides in the secreted. Functionally, slow-binding inhibitor of serine proteases. The inhibitor rapidly binds to the protease forming a weak enzyme-inhibitor complex, and this is followed by a slow isomerization forming a tight-binding enzyme-inhibitor complex. Active against subtilisin A, perkinsin and trypsin with dissociation constants of 0.29 nM, 13.7 nM and 17.7 nM respectively. Not active against thermolysin, papain or pepsin. Has antiparasitic activity against the protozoan P.marinus. The protein is Serine protease inhibitor Cvsi-1 of Crassostrea virginica (Eastern oyster).